The following is a 364-amino-acid chain: Endopolygalacturonase B (364 aa).

Positions 1 to 20 (MHFLQNSLIAAAMGAALVAA) are cleaved as a signal peptide. Residues 21–29 (APAADLDAR) constitute a propeptide that is removed on maturation. A disulfide bond links Cys-32 and Cys-47. N-linked (GlcNAc...) asparagine glycosylation is present at Asn-138. PbH1 repeat units follow at residues 159 to 188 (SDHL…DIGS), 189 to 210 (STYI…AINS), 211 to 231 (GEHI…SIGS), 240 to 261 (VKSV…RIKT), 269 to 291 (VTDV…IVEQ), and 303 to 348 (TNGV…DITG). Asp-203 (proton donor) is an active-site residue. A disulfide bond links Cys-205 and Cys-221. Residue His-225 is part of the active site. 2 disulfides stabilise this stretch: Cys-331–Cys-336 and Cys-355–Cys-364.

Belongs to the glycosyl hydrolase 28 family.

It localises to the secreted. The enzyme catalyses (1,4-alpha-D-galacturonosyl)n+m + H2O = (1,4-alpha-D-galacturonosyl)n + (1,4-alpha-D-galacturonosyl)m.. Its function is as follows. Involved in maceration and soft-rotting of plant tissue. Hydrolyzes the 1,4-alpha glycosidic bonds of de-esterified pectate in the smooth region of the plant cell wall. This Emericella nidulans (strain FGSC A4 / ATCC 38163 / CBS 112.46 / NRRL 194 / M139) (Aspergillus nidulans) protein is Endopolygalacturonase B (pgaB).